Consider the following 148-residue polypeptide: Outer envelope pore protein 16-1, chloroplastic (148 aa).

A contains 4 beta strands region spans residues 2-73 (PSSTFSGTVS…EHALKKLCKE (72 aa)). A run of 3 helical transmembrane segments spans residues 75–91 (VYWG…EYGI), 102–118 (NAML…SAVG), and 125–142 (IVID…SQFV).

It belongs to the Tim17/Tim22/Tim23 family. Plastid outer envelope porin OEP16 (TC 1.B.30) subfamily. As to quaternary structure, homodimer and oligomers in membrane. Forms large complexes including TOC33, pPORA and OEP161 during pPORA import into plastids at the plastid envelope membrane. As to expression, expressed predominantly in leaves and cotyledons.

It is found in the plastid. The protein resides in the chloroplast outer membrane. Its subcellular location is the etioplast membrane. With respect to regulation, stimulated by GTP. In terms of biological role, voltage-dependent high-conductance channel with a slight cation-selectivity; selective for amino acids but excludes triosephosphates or uncharged sugars. Non-essential amino acid-selective channel protein and translocation pore for NADPH:protochlorophyllide oxidoreductase A (PORA) and possibly PORB. Involved in PORA precursor (pPORA) import and thus confers photoprotection onto etiolated seedlings during greening. The sequence is that of Outer envelope pore protein 16-1, chloroplastic (OEP161) from Arabidopsis thaliana (Mouse-ear cress).